The primary structure comprises 348 residues: Flagellar P-ring protein (348 aa).

The N-terminal stretch at 1-16 (MRIFLLCLALSLSVFA) is a signal peptide.

This sequence belongs to the FlgI family. As to quaternary structure, the basal body constitutes a major portion of the flagellar organelle and consists of four rings (L,P,S, and M) mounted on a central rod.

It localises to the periplasm. The protein resides in the bacterial flagellum basal body. In terms of biological role, assembles around the rod to form the L-ring and probably protects the motor/basal body from shearing forces during rotation. This is Flagellar P-ring protein from Campylobacter lari (strain RM2100 / D67 / ATCC BAA-1060).